Here is a 266-residue protein sequence, read N- to C-terminus: MVDTAVVDTALLEANQLSYHVQGQKLINNVSLQIASGEMVAIIGPNGAGKSTLLRLLTGYLAPSEGHCQLLGKNLNSWQPQALARTRAVMRQYSDLAFPFSVSEVIQMGRAPYGAAQNRQALQEVMAQTDCLALAQRDYRALSGGEQQRVQLARVLAQLWQPEPTSRWLFLDEPTSALDLYHQQHTLRLLRQLTLEEPLAVCCVLHDLNLAALYADRILLLAQGELVACGTPEEVLNAETLTRWYQADLGISRHPESALPQIYLRQ.

The ABC transporter domain occupies 12-248; the sequence is LEANQLSYHV…ETLTRWYQAD (237 aa). 44–51 is an ATP binding site; sequence GPNGAGKS.

This sequence belongs to the ABC transporter superfamily. Heme (hemin) importer (TC 3.A.1.14.5) family. As to quaternary structure, the complex is composed of two ATP-binding proteins (HmuV), two transmembrane proteins (HmuU) and a solute-binding protein (HmuT).

The protein localises to the cell inner membrane. Part of the ABC transporter complex HmuTUV involved in hemin import. Responsible for energy coupling to the transport system. The protein is Hemin import ATP-binding protein HmuV of Yersinia enterocolitica.